Here is a 144-residue protein sequence, read N- to C-terminus: Large ribosomal subunit protein uL16 (144 aa).

This sequence belongs to the universal ribosomal protein uL16 family. Part of the 50S ribosomal subunit.

Its function is as follows. Binds 23S rRNA and is also seen to make contacts with the A and possibly P site tRNAs. This Latilactobacillus sakei subsp. sakei (strain 23K) (Lactobacillus sakei subsp. sakei) protein is Large ribosomal subunit protein uL16.